A 285-amino-acid polypeptide reads, in one-letter code: Methyltransferase grgD (285 aa).

This sequence belongs to the methyltransferase superfamily. LaeA methyltransferase family.

Its pathway is secondary metabolite biosynthesis. Methyltransferase; part of the gene cluster that mediates the biosynthesis of gregatin A, a fungal polyketide featuring an alkylated furanone core. The PKS grgA synthesizes C11 and C4 polyketide chains in the presence and absence of the trans-enoyl reductase grgB, respectively. The polyketide transferase grgF is then responsible for the fusion of the two carbon chains to produce the furanone skeleton of gregatin A. Next, the cytochrome P450 monooxygenase grgG accepts performs the oxidative cyclization to furnish the gregatin scaffold and leads to the formation of desmethylgregatin A. Finally, the O-methyltransferase grgD methylates the carboxyl group of desmethylgregatin A to provide gregatin A. The sequence is that of Methyltransferase grgD from Penicillium sp.